A 251-amino-acid polypeptide reads, in one-letter code: Protein DEEPER ROOTING 1 (251 aa).

Residues 46-52 (SLLAIGT) carry the IGT motif motif. Positions 64–105 (VENSSDNVQSVQDTVKFTEEEVDKIRKEFETLLAIKDQAEAQ) form a coiled coil.

Belongs to the LAZY family.

Involved in the control of root growth angle. Involved in cell elongation in the root tip that causes asymmetric root growth and downward bending of the root in response to gravity. In Oryza sativa subsp. japonica (Rice), this protein is Protein DEEPER ROOTING 1.